The following is a 487-amino-acid chain: Probable glutamate receptor (487 aa).

The N-terminal stretch at 1–23 is a signal peptide; sequence MDKGQHFVFFVLTTVLLLRESSH. Over 24 to 169 the chain is Extracellular; sequence AGAMRNDAAA…FFHFLAPFSK (146 aa). Asn-104 is a glycosylation site (N-linked (GlcNAc...) asparagine). The chain crosses the membrane as a helical span at residues 170-190; it reads ETWTGLLFAYILTCFCLFLVA. Residues 191–235 are Cytoplasmic-facing; it reads RLSPCEWNEPKNEENHFTFLNSLWFGAGALALQGVTPRPKALSVR. The chain crosses the membrane as a helical span at residues 236–256; the sequence is VIAAIWWLFTIALLAAYIANF. Over 257–419 the chain is Extracellular; the sequence is TALLSSGSEQ…ERWSPLQPQA (163 aa). Residues 420–440 form a helical membrane-spanning segment; that stretch reads LGGLFLTLAIGLALGVIAAVV. The Cytoplasmic portion of the chain corresponds to 441-487; the sequence is ELSNKSRHAAGHVKKSCCSIFTEEMCTRLRIKENTRQSQETSGRANA.

This sequence belongs to the glutamate-gated ion channel (TC 1.A.10.1) family.

The protein resides in the cell membrane. Its subcellular location is the postsynaptic cell membrane. In terms of biological role, receptor for glutamate. L-glutamate acts as an excitatory neurotransmitter at many synapses in the central nervous system. The postsynaptic actions of Glu are mediated by a variety of receptors that are named according to their selective agonists. This chain is Probable glutamate receptor (KBP), found in Anas platyrhynchos (Mallard).